Consider the following 567-residue polypeptide: DNA ligase B (567 aa).

K132 functions as the N6-AMP-lysine intermediate in the catalytic mechanism.

This sequence belongs to the NAD-dependent DNA ligase family. LigB subfamily.

It carries out the reaction NAD(+) + (deoxyribonucleotide)n-3'-hydroxyl + 5'-phospho-(deoxyribonucleotide)m = (deoxyribonucleotide)n+m + AMP + beta-nicotinamide D-nucleotide.. Catalyzes the formation of phosphodiester linkages between 5'-phosphoryl and 3'-hydroxyl groups in double-stranded DNA using NAD as a coenzyme and as the energy source for the reaction. This chain is DNA ligase B, found in Yersinia pseudotuberculosis serotype IB (strain PB1/+).